A 380-amino-acid chain; its full sequence is Pregnancy-associated glycoprotein 1 (380 aa).

The first 15 residues, Met1 to Cys15, serve as a signal peptide directing secretion. Positions Ile16 to Phe53 are cleaved as a propeptide — activation peptide. Residues Asn57 and Asn74 are each glycosylated (N-linked (GlcNAc...) asparagine). The 307-residue stretch at Tyr71 to Ala377 folds into the Peptidase A1 domain. The active site involves Asp89. Cysteines 102 and 107 form a disulfide. Residues Asn125 and Asn182 are each glycosylated (N-linked (GlcNAc...) asparagine). Residues Cys261 and Cys265 are joined by a disulfide bond. Residue Asp270 is part of the active site. Cys303 and Cys337 are disulfide-bonded.

It belongs to the peptidase A1 family. N-Glycosylated; the glycans terminate in either N-acetyl-galactosamine (GalNAc) or N-acetyllactosamine. Terminal GalNAc on Asn-linked glycans is greatly reduced prior to parturition while lactosamine-type N-glycans remain unaltered. In terms of tissue distribution, trophoblast and placental tissue. Produced specifically in the invasive binucleate cells of the placenta. Becomes detectable in maternal serum soon after implantation.

Its subcellular location is the secreted. The protein localises to the extracellular space. Functionally, appears to be proteolytically inactive. This chain is Pregnancy-associated glycoprotein 1, found in Bos taurus (Bovine).